Here is a 114-residue protein sequence, read N- to C-terminus: Large ribosomal subunit protein bL19 (114 aa).

The protein belongs to the bacterial ribosomal protein bL19 family.

This protein is located at the 30S-50S ribosomal subunit interface and may play a role in the structure and function of the aminoacyl-tRNA binding site. The chain is Large ribosomal subunit protein bL19 from Clavibacter michiganensis subsp. michiganensis (strain NCPPB 382).